We begin with the raw amino-acid sequence, 201 residues long: Ras-related protein Rab-1B (201 aa).

M1 bears the N-acetylmethionine mark. GTP contacts are provided by S17, G18, V19, G20, K21, S22, C23, Y33, T34, E35, S36, S39, and T40. S22 serves as a coordination point for Mg(2+). The Switch 1 signature appears at 30–45; the sequence is DDTYTESYISTIGVDF. Positions 40 and 63 each coordinate Mg(2+). The switch 2 region; required for interaction with REP1/CHM stretch occupies residues 64–83; it reads TAGQERFRTVTSSYYRGAHG. Positions 65–80 match the Switch 2 motif; sequence AGQERFRTVTSSYYRG. G66, N121, K122, D124, S151, A152, and K153 together coordinate GTP. The interval 173–201 is disordered; sequence MGPGAASGGERPNLKIDSTPVKSASGGCC. 2 S-geranylgeranyl cysteine lipidation sites follow: C200 and C201. C201 bears the Cysteine methyl ester mark.

This sequence belongs to the small GTPase superfamily. Rab family. As to quaternary structure, interacts with MICAL1 and MICAL2. Interacts (in GTP-bound form) with MICALCL, MICAL1 and MILCAL3. Interacts with GDI1; the interaction requires the GDP-bound state. Interacts with CHM/REP1; the interaction requires the GDP-bound form and is necessary for prenylation by GGTase II. Interacts with RabGAP TBC1D20. Interacts (in GDP-bound form) with lipid phosphatase MTMR6 (via GRAM domain); the interaction regulates MTMR6 recruitment to the endoplasmic reticulum-Golgi intermediate compartment. Interacts (in GDP-bound form) with lipid phosphatase MTMR7. Requires Mg(2+) as cofactor. In terms of processing, prenylated; by GGTase II, only after interaction of the substrate with Rab escort protein 1 (REP1).

It localises to the cytoplasm. Its subcellular location is the membrane. It is found in the preautophagosomal structure membrane. The protein localises to the perinuclear region. It catalyses the reaction GTP + H2O = GDP + phosphate + H(+). Its activity is regulated as follows. Regulated by guanine nucleotide exchange factors (GEFs) which promote the exchange of bound GDP for free GTP. Regulated by GTPase activating proteins (GAPs) including TBC1D20 which increases the GTP hydrolysis activity. Inhibited by GDP dissociation inhibitors (GDIs). Its function is as follows. The small GTPases Rab are key regulators of intracellular membrane trafficking, from the formation of transport vesicles to their fusion with membranes. Rabs cycle between an inactive GDP-bound form and an active GTP-bound form that is able to recruit to membranes different set of downstream effectors directly responsible for vesicle formation, movement, tethering and fusion. Plays a role in the initial events of the autophagic vacuole development which take place at specialized regions of the endoplasmic reticulum. Regulates vesicular transport between the endoplasmic reticulum and successive Golgi compartments. Required to modulate the compacted morphology of the Golgi. Promotes the recruitment of lipid phosphatase MTMR6 to the endoplasmic reticulum-Golgi intermediate compartment. This chain is Ras-related protein Rab-1B (Rab1b), found in Rattus norvegicus (Rat).